We begin with the raw amino-acid sequence, 391 residues long: Polyketide synthase 1 (391 aa).

Residue Cys-164 is part of the active site.

This sequence belongs to the thiolase-like superfamily. Chalcone/stilbene synthases family. In terms of assembly, homodimer. Expressed in fruits.

It carries out the reaction (E)-4-coumaroyl-CoA + 3 malonyl-CoA + 3 H(+) = 2',4,4',6'-tetrahydroxychalcone + 3 CO2 + 4 CoA. Its pathway is secondary metabolite biosynthesis; flavonoid biosynthesis. Polyketide synthase producing naringenin chalcone and slightly p-coumaryltriacetic acid lactone (CTAL). Can use p-coumaryl-CoA as substrate. The chain is Polyketide synthase 1 (PKS1) from Rubus idaeus (Raspberry).